Here is a 301-residue protein sequence, read N- to C-terminus: Ribosomal protein L11 methyltransferase (301 aa).

4 residues coordinate S-adenosyl-L-methionine: threonine 147, glycine 168, aspartate 190, and asparagine 237.

Belongs to the methyltransferase superfamily. PrmA family.

It is found in the cytoplasm. It catalyses the reaction L-lysyl-[protein] + 3 S-adenosyl-L-methionine = N(6),N(6),N(6)-trimethyl-L-lysyl-[protein] + 3 S-adenosyl-L-homocysteine + 3 H(+). Methylates ribosomal protein L11. This is Ribosomal protein L11 methyltransferase from Synechococcus sp. (strain RCC307).